The following is a 452-amino-acid chain: Bifunctional protein GlmU (452 aa).

Positions 1–226 are pyrophosphorylase; that stretch reads MSLDIVILAA…AMEVQGANDR (226 aa). Residues 8–11, Lys-22, Gln-73, 78–79, 99–101, Gly-136, Glu-151, Asn-166, and Asn-224 contribute to the UDP-N-acetyl-alpha-D-glucosamine site; these read LAAG, GT, and YGD. Asp-101 lines the Mg(2+) pocket. Asn-224 lines the Mg(2+) pocket. Residues 227 to 247 are linker; it reads IQLAELERHYQLRAARRLMAQ. Residues 248–452 are N-acetyltransferase; that stretch reads GVTLRDPARF…IDGWQRPTKK (205 aa). UDP-N-acetyl-alpha-D-glucosamine is bound by residues Arg-330 and Lys-348. The active-site Proton acceptor is His-360. Residues Tyr-363 and Asn-374 each contribute to the UDP-N-acetyl-alpha-D-glucosamine site. Acetyl-CoA-binding positions include Ala-377, 383–384, Ser-402, Ala-420, and Arg-437; that span reads NY.

It in the N-terminal section; belongs to the N-acetylglucosamine-1-phosphate uridyltransferase family. In the C-terminal section; belongs to the transferase hexapeptide repeat family. In terms of assembly, homotrimer. Mg(2+) serves as cofactor.

It is found in the cytoplasm. The enzyme catalyses alpha-D-glucosamine 1-phosphate + acetyl-CoA = N-acetyl-alpha-D-glucosamine 1-phosphate + CoA + H(+). It carries out the reaction N-acetyl-alpha-D-glucosamine 1-phosphate + UTP + H(+) = UDP-N-acetyl-alpha-D-glucosamine + diphosphate. The protein operates within nucleotide-sugar biosynthesis; UDP-N-acetyl-alpha-D-glucosamine biosynthesis; N-acetyl-alpha-D-glucosamine 1-phosphate from alpha-D-glucosamine 6-phosphate (route II): step 2/2. Its pathway is nucleotide-sugar biosynthesis; UDP-N-acetyl-alpha-D-glucosamine biosynthesis; UDP-N-acetyl-alpha-D-glucosamine from N-acetyl-alpha-D-glucosamine 1-phosphate: step 1/1. It functions in the pathway bacterial outer membrane biogenesis; LPS lipid A biosynthesis. Its function is as follows. Catalyzes the last two sequential reactions in the de novo biosynthetic pathway for UDP-N-acetylglucosamine (UDP-GlcNAc). The C-terminal domain catalyzes the transfer of acetyl group from acetyl coenzyme A to glucosamine-1-phosphate (GlcN-1-P) to produce N-acetylglucosamine-1-phosphate (GlcNAc-1-P), which is converted into UDP-GlcNAc by the transfer of uridine 5-monophosphate (from uridine 5-triphosphate), a reaction catalyzed by the N-terminal domain. This chain is Bifunctional protein GlmU, found in Stutzerimonas stutzeri (strain A1501) (Pseudomonas stutzeri).